A 360-amino-acid polypeptide reads, in one-letter code: Protein RecA (360 aa).

69–76 provides a ligand contact to ATP; the sequence is GPESSGKT.

The protein belongs to the RecA family.

The protein resides in the cytoplasm. Its function is as follows. Can catalyze the hydrolysis of ATP in the presence of single-stranded DNA, the ATP-dependent uptake of single-stranded DNA by duplex DNA, and the ATP-dependent hybridization of homologous single-stranded DNAs. It interacts with LexA causing its activation and leading to its autocatalytic cleavage. The chain is Protein RecA from Trichodesmium erythraeum (strain IMS101).